The chain runs to 148 residues: Large ribosomal subunit protein bL9 (148 aa).

This sequence belongs to the bacterial ribosomal protein bL9 family.

Binds to the 23S rRNA. The chain is Large ribosomal subunit protein bL9 from Pseudomonas syringae pv. tomato (strain ATCC BAA-871 / DC3000).